We begin with the raw amino-acid sequence, 493 residues long: Tripartite motif-containing protein 5 (493 aa).

Residue Ala-2 is modified to N-acetylalanine. The segment at Cys-15 to Arg-59 adopts an RING-type zinc-finger fold. Residue Ser-86 is modified to Phosphoserine. The B box-type zinc finger occupies Gln-90–Glu-132. Cys-95, His-98, Cys-117, and His-123 together coordinate Zn(2+). A coiled-coil region spans residues Leu-130–Gly-241. The tract at residues Phe-185 to Asn-198 is required for interaction with GABARAP and for autophagy. One can recognise a B30.2/SPRY domain in the interval Leu-281–Ser-493.

This sequence belongs to the TRIM/RBCC family. As to quaternary structure, can form homodimers and homotrimers. In addition to lower-order dimerization, also exhibits a higher-order multimerization and both low- and high-order multimerizations are essential for its restriction activity. Isoform Delta interacts with BTBD1 and BTBD2. Interacts with PSMC4, PSMC5, PSMD7 and HSPA8/HSC70. Interacts (via B30.2/SPRY domain) with HSPA1A/B. Interacts with PSMC2, MAP3K7/TAK1, TAB2 and TAB3. Interacts with SQSTM1. Interacts with TRIM6 and TRIM34. Interacts with ULK1 (phosphorylated form), GABARAP, GABARAPL1, GABARAPL2, MAP1LC3A, MAP1LC3C and BECN1. Degraded in a proteasome-independent fashion in the absence of viral infection but in a proteasome-dependent fashion following exposure to restriction sensitive virus. Post-translationally, autoubiquitinated in a RING finger- and UBE2D2-dependent manner. Monoubiquitinated by TRIM21. Deubiquitinated by Yersinia YopJ. Ubiquitination may not lead to proteasomal degradation.

The protein resides in the cytoplasm. It localises to the nucleus. The catalysed reaction is S-ubiquitinyl-[E2 ubiquitin-conjugating enzyme]-L-cysteine + [acceptor protein]-L-lysine = [E2 ubiquitin-conjugating enzyme]-L-cysteine + N(6)-ubiquitinyl-[acceptor protein]-L-lysine.. It functions in the pathway protein modification; protein ubiquitination. Functionally, capsid-specific restriction factor that prevents infection from non-host-adapted retroviruses. Blocks viral replication early in the life cycle, after viral entry but before reverse transcription. In addition to acting as a capsid-specific restriction factor, also acts as a pattern recognition receptor that activates innate immune signaling in response to the retroviral capsid lattice. Binding to the viral capsid triggers its E3 ubiquitin ligase activity, and in concert with the heterodimeric ubiquitin conjugating enzyme complex UBE2V1-UBE2N (also known as UBC13-UEV1A complex) generates 'Lys-63'-linked polyubiquitin chains, which in turn are catalysts in the autophosphorylation of the MAP3K7/TAK1 complex (includes TAK1, TAB2, and TAB3). Activation of the MAP3K7/TAK1 complex by autophosphorylation results in the induction and expression of NF-kappa-B and MAPK-responsive inflammatory genes, thereby leading to an innate immune response in the infected cell. Restricts infection by N-tropic murine leukemia virus (N-MLV), equine infectious anemia virus (EIAV), simian immunodeficiency virus of macaques (SIVmac), feline immunodeficiency virus (FIV), and bovine immunodeficiency virus (BIV). Plays a role in regulating autophagy through activation of autophagy regulator BECN1 by causing its dissociation from its inhibitors BCL2 and TAB2. Also plays a role in autophagy by acting as a selective autophagy receptor which recognizes and targets HIV-1 capsid protein p24 for autophagic destruction. The sequence is that of Tripartite motif-containing protein 5 (TRIM5) from Homo sapiens (Human).